Consider the following 270-residue polypeptide: Monofunctional glycosyltransferase (270 aa).

A disordered region spans residues 1–35; the sequence is MKRSDRYKTYNKPNDSNDSNQLHHNTYFKPVNKPQ. The span at 11 to 24 shows a compositional bias: polar residues; sequence NKPNDSNDSNQLHH. A helical membrane pass occupies residues 47–67; it reads LLIPILIIIGIIIGVMYALSL.

The protein belongs to the glycosyltransferase 51 family.

The protein localises to the cell membrane. The enzyme catalyses [GlcNAc-(1-&gt;4)-Mur2Ac(oyl-L-Ala-gamma-D-Glu-L-Lys-D-Ala-D-Ala)](n)-di-trans,octa-cis-undecaprenyl diphosphate + beta-D-GlcNAc-(1-&gt;4)-Mur2Ac(oyl-L-Ala-gamma-D-Glu-L-Lys-D-Ala-D-Ala)-di-trans,octa-cis-undecaprenyl diphosphate = [GlcNAc-(1-&gt;4)-Mur2Ac(oyl-L-Ala-gamma-D-Glu-L-Lys-D-Ala-D-Ala)](n+1)-di-trans,octa-cis-undecaprenyl diphosphate + di-trans,octa-cis-undecaprenyl diphosphate + H(+). It functions in the pathway cell wall biogenesis; peptidoglycan biosynthesis. Functionally, peptidoglycan polymerase that catalyzes glycan chain elongation using lipid-linked disaccharide-pentapeptide as the substrate. The sequence is that of Monofunctional glycosyltransferase from Staphylococcus saprophyticus subsp. saprophyticus (strain ATCC 15305 / DSM 20229 / NCIMB 8711 / NCTC 7292 / S-41).